Consider the following 142-residue polypeptide: Large ribosomal subunit protein uL13 (142 aa).

It belongs to the universal ribosomal protein uL13 family. As to quaternary structure, part of the 50S ribosomal subunit.

Its function is as follows. This protein is one of the early assembly proteins of the 50S ribosomal subunit, although it is not seen to bind rRNA by itself. It is important during the early stages of 50S assembly. The polypeptide is Large ribosomal subunit protein uL13 (Bordetella petrii (strain ATCC BAA-461 / DSM 12804 / CCUG 43448)).